Reading from the N-terminus, the 185-residue chain is Large ribosomal subunit protein uL16m (185 aa).

It belongs to the universal ribosomal protein uL16 family.

It localises to the mitochondrion. This Zea mays (Maize) protein is Large ribosomal subunit protein uL16m (RPL16).